The chain runs to 568 residues: MDQDAFILKEDSEVEREAPGGRESLSDVIGFLDAVLSSEPTDIGGDRSWLHNTINTPQGPGSAHRAKSEGEGEVSTPSTQDNRSGEESRVSGRTSKPEAEAHAGNLDKQNIHRAFGGRTGTNSVSQDLGDGGDSGILENPPNERGYPRSGIEDENREMAAHPDKRGEDQAEGLPEEVRGGTSLPDEGEGGASNNGRSMEPGSSHSARVTGVLVIPSPELEEAVLRRNKRRPTNSGSKPLTPATVPGTRSPPLNRYNSTGSPPGKPPSTQDEHINSGDTPAVRVKDRKPPIGTRSVSDCPANGRPIHPGLESDSTKKGIGENTSSMKEMATLLTSLGVIQSAQEFESSRDASYVFARRALKSANYAEMTFNVCGLILSAEKSSARKVDENKQLLKQIQESVESFRDIYKRFSEYQKEQNSLLMSNLSTLHIITDRGGKTDNTDSLTRSPSVFAKSKENKTKATRFDPSMETLEDMKYKPDLIREDEFRDEIRNPVYQERDTEPRASNASRLLPSKEKPTMHSLRLVIESSPLSRAEKAAYVKSLSKCKTDQEVKAVMELVEEDIESLTN.

2 disordered regions span residues 1-23 and 38-320; these read MDQD…GGRE and SEPT…GIGE. Residues 7 to 20 show a composition bias toward basic and acidic residues; that stretch reads ILKEDSEVEREAPG. Positions 33–41 are N0 binding; sequence DAVLSSEPT. Positions 50-59 are enriched in polar residues; that stretch reads LHNTINTPQG. The residue at position 68 (Ser-68) is a Phosphoserine; by host. Residues 83 to 101 show a composition bias toward basic and acidic residues; the sequence is RSGEESRVSGRTSKPEAEA. Ser-125 bears the Phosphoserine; by host mark. Residues 150–168 are compositionally biased toward basic and acidic residues; the sequence is GIEDENREMAAHPDKRGED. Positions 191-206 are enriched in polar residues; the sequence is ASNNGRSMEPGSSHSA. Residues Ser-192, Ser-249, Ser-257, and Ser-260 each carry the phosphoserine; by host modification. A multimerization region spans residues 344–411; it reads FESSRDASYV…SFRDIYKRFS (68 aa). Residues 364–429 adopt a coiled-coil conformation; the sequence is YAEMTFNVCG…LLMSNLSTLH (66 aa). Positions 412–445 are l protein binding; that stretch reads EYQKEQNSLLMSNLSTLHIITDRGGKTDNTDSLT. 2 positions are modified to phosphoserine; by host: Ser-447 and Ser-449. The interval 479-568 is interaction with the nucleocapsid (N-RNA); it reads DLIREDEFRD…VEEDIESLTN (90 aa). The segment at 496–516 is disordered; it reads QERDTEPRASNASRLLPSKEK. Residues 547–566 are formation of N-RNA complex involved in transcription and replication; it reads KTDQEVKAVMELVEEDIESL.

The protein belongs to the respirovirus P protein family. In terms of assembly, homotetramer. Interacts (via multimerization domain) with polymerase L; this interaction forms the polymerase complex. Interacts (via N-terminus) with N0; this interaction allows P to chaperon N0 before encapsidation and form the N-P complex. Interacts (via C-terminus) with N-RNA template; this interaction positions the polymerase on the template. Post-translationally, phosphorylated by PKC/PRKCZ, and other unknown kinases. Phosphorylation is necessary for viral transcription and replication. The N-terminus contains the majority of phosphorylated sites. Ser-249 is the major site of phosphorylation, but is not necessary for most functions.

It localises to the host cytoplasm. Functionally, essential cofactor of the RNA polymerase L that plays a central role in the transcription and replication by forming the polymerase complex with RNA polymerase L and recruiting L to the genomic N-RNA template for RNA synthesis. Also plays a central role in the encapsidation of nascent RNA chains by forming the encapsidation complex with the nucleocapsid protein N (N-P complex). Acts as a chaperone for newly synthesized free N protein, so-called N0, allowing encapsidation of nascent RNA chains during replication. The nucleoprotein protein N prevents excessive phosphorylation of P, which leads to down-regulation of viral transcription/ replication. Participates, together with N, in the formation of viral factories (viroplasms), which are large inclusions in the host cytoplasm where replication takes place. Recruits host PI4KB and remodel the host endoplasmic reticulum membrane to form viral replication factories. This chain is Phosphoprotein (P/V/C), found in Cavia cutleri (Guinea pig).